The chain runs to 94 residues: Small ribosomal subunit protein bS20 (94 aa).

It belongs to the bacterial ribosomal protein bS20 family.

In terms of biological role, binds directly to 16S ribosomal RNA. This Aquifex aeolicus (strain VF5) protein is Small ribosomal subunit protein bS20.